A 231-amino-acid chain; its full sequence is Large ribosomal subunit protein uL1 (231 aa).

It belongs to the universal ribosomal protein uL1 family. Part of the 50S ribosomal subunit.

Binds directly to 23S rRNA. The L1 stalk is quite mobile in the ribosome, and is involved in E site tRNA release. Its function is as follows. Protein L1 is also a translational repressor protein, it controls the translation of the L11 operon by binding to its mRNA. The chain is Large ribosomal subunit protein uL1 from Azoarcus sp. (strain BH72).